The primary structure comprises 268 residues: MSSKVHLGHTARKRFGQNFLTDDNVINRIVGAIAPDNDHVMVEIGPGLGALTEPVATAIDNLTVVELDRDLVERLQNHPVLKDKLTIHQGDALQFDFSQLVVPGKKLKVFGNLPYNISTPLMFHLFEFAEQIETMHFMLQKEVVLRLSASPGNKAYGRLTVMAQYFCQVVPVLEVPPHSFAPPPKVDSAVVRLLPYAEKPFPCKDVNVLRQLCTTAFNMRRKTLRNNLKQVLSDEEFEQLGIDPNLRPEQISVEQYVAMANMVCDKQA.

S-adenosyl-L-methionine-binding residues include Asn-18, Leu-20, Gly-45, Glu-66, Asp-91, and Asn-112.

It belongs to the class I-like SAM-binding methyltransferase superfamily. rRNA adenine N(6)-methyltransferase family. RsmA subfamily.

Its subcellular location is the cytoplasm. It carries out the reaction adenosine(1518)/adenosine(1519) in 16S rRNA + 4 S-adenosyl-L-methionine = N(6)-dimethyladenosine(1518)/N(6)-dimethyladenosine(1519) in 16S rRNA + 4 S-adenosyl-L-homocysteine + 4 H(+). Specifically dimethylates two adjacent adenosines (A1518 and A1519) in the loop of a conserved hairpin near the 3'-end of 16S rRNA in the 30S particle. May play a critical role in biogenesis of 30S subunits. The chain is Ribosomal RNA small subunit methyltransferase A from Shewanella sp. (strain MR-7).